The primary structure comprises 382 residues: Alkanesulfonate monooxygenase (382 aa).

This sequence belongs to the SsuD family. In terms of assembly, homotetramer.

It carries out the reaction an alkanesulfonate + FMNH2 + O2 = an aldehyde + FMN + sulfite + H2O + 2 H(+). Functionally, catalyzes the desulfonation of aliphatic sulfonates. The sequence is that of Alkanesulfonate monooxygenase from Serratia proteamaculans (strain 568).